The primary structure comprises 215 residues: Ribose-5-phosphate isomerase A (215 aa).

Residues 26–29 (TGST), 79–82 (DGAD), and 92–95 (KGGG) each bind substrate. Glutamate 101 (proton acceptor) is an active-site residue. Lysine 119 contributes to the substrate binding site.

It belongs to the ribose 5-phosphate isomerase family. As to quaternary structure, homodimer.

The enzyme catalyses aldehydo-D-ribose 5-phosphate = D-ribulose 5-phosphate. Its pathway is carbohydrate degradation; pentose phosphate pathway; D-ribose 5-phosphate from D-ribulose 5-phosphate (non-oxidative stage): step 1/1. Catalyzes the reversible conversion of ribose-5-phosphate to ribulose 5-phosphate. This chain is Ribose-5-phosphate isomerase A, found in Xylella fastidiosa (strain 9a5c).